We begin with the raw amino-acid sequence, 424 residues long: PDZ and LIM domain protein 7 (424 aa).

Positions 1 to 85 (MDSFKVVLEG…RLSLSLSRAQ (85 aa)) constitute a PDZ domain. Phosphoserine is present on Ser78. The segment covering 81–98 (LSRAQPAQSKPQKVQTPD) has biased composition (polar residues). Residues 81–221 (LSRAQPAQSK…HTQPATPTPM (141 aa)) are disordered. At Thr96 the chain carries Phosphothreonine. Residues 110–123 (SKQRLMEDTEDWRP) show a composition bias toward basic and acidic residues. Residues 174-187 (EPWPGPTTPSPTSR) are compositionally biased toward pro residues. Residues 204–221 (KTSTVLTRHTQPATPTPM) are compositionally biased toward polar residues. LIM zinc-binding domains lie at 247-305 (PVCH…VRYA), 306-365 (PSCA…MFGT), and 366-424 (KCRG…FSHV).

Binds via its LIM zinc-binding 3 domain (LIM 3) domain to endocytic codes of INSR, but not with those of IGF1R, LDLR, TFRC, or EGFR. Interacts with various PKC isoforms through the LIM zinc-binding domains. Binds to RET in a phosphorylation-independent manner via its LIM zinc-binding 2 domain (LIM 2). Probably part of a complex with SHC and the RET dimer. Interacts with TPM2, TBX4 and TBX5.

It is found in the cytoplasm. Its subcellular location is the cytoskeleton. In terms of biological role, may function as a scaffold on which the coordinated assembly of proteins can occur. May play a role as an adapter that, via its PDZ domain, localizes LIM-binding proteins to actin filaments of both skeletal muscle and nonmuscle tissues. Involved in both of the two fundamental mechanisms of bone formation, direct bone formation (e.g. embryonic flat bones mandible and cranium), and endochondral bone formation (e.g. embryonic long bone development). Plays a role during fracture repair. Involved in BMP6 signaling pathway. The chain is PDZ and LIM domain protein 7 (PDLIM7) from Bos taurus (Bovine).